Consider the following 410-residue polypeptide: Chaperonin GroEL (410 aa).

ATP-binding positions include 29 to 32 (TAGP), lysine 50, and 86 to 90 (DGTTT).

The protein belongs to the chaperonin (HSP60) family. As to quaternary structure, forms a cylinder of 14 subunits composed of two heptameric rings stacked back-to-back. Interacts with the co-chaperonin GroES.

The protein localises to the cytoplasm. The catalysed reaction is ATP + H2O + a folded polypeptide = ADP + phosphate + an unfolded polypeptide.. Functionally, together with its co-chaperonin GroES, plays an essential role in assisting protein folding. The GroEL-GroES system forms a nano-cage that allows encapsulation of the non-native substrate proteins and provides a physical environment optimized to promote and accelerate protein folding. The chain is Chaperonin GroEL from Ehrlichia canis.